We begin with the raw amino-acid sequence, 421 residues long: Histidine--tRNA ligase (421 aa).

Belongs to the class-II aminoacyl-tRNA synthetase family. As to quaternary structure, homodimer.

Its subcellular location is the cytoplasm. The catalysed reaction is tRNA(His) + L-histidine + ATP = L-histidyl-tRNA(His) + AMP + diphosphate + H(+). This chain is Histidine--tRNA ligase, found in Caldicellulosiruptor bescii (strain ATCC BAA-1888 / DSM 6725 / KCTC 15123 / Z-1320) (Anaerocellum thermophilum).